Consider the following 271-residue polypeptide: Putative carboxymethylenebutenolidase (271 aa).

Catalysis depends on residues Cys147, Asp204, and His236.

Belongs to the dienelactone hydrolase family.

It carries out the reaction 2-(5-oxo-2,5-dihydrofuran-2-ylidene)acetate + H2O = 4-oxohex-2-enedioate + H(+). The protein is Putative carboxymethylenebutenolidase (ysgA) of Escherichia coli (strain K12).